The following is a 274-amino-acid chain: 2,3,4,5-tetrahydropyridine-2,6-dicarboxylate N-succinyltransferase (274 aa).

Arginine 104 and aspartate 141 together coordinate substrate.

It belongs to the transferase hexapeptide repeat family. As to quaternary structure, homotrimer.

It is found in the cytoplasm. It catalyses the reaction (S)-2,3,4,5-tetrahydrodipicolinate + succinyl-CoA + H2O = (S)-2-succinylamino-6-oxoheptanedioate + CoA. Its pathway is amino-acid biosynthesis; L-lysine biosynthesis via DAP pathway; LL-2,6-diaminopimelate from (S)-tetrahydrodipicolinate (succinylase route): step 1/3. The protein is 2,3,4,5-tetrahydropyridine-2,6-dicarboxylate N-succinyltransferase of Shewanella sediminis (strain HAW-EB3).